The chain runs to 79 residues: Protein GOLVEN 2 (79 aa).

An N-terminal signal peptide occupies residues 1–26 (MAIRVSHKSFLVALLLILFISSPTQA). Positions 27-65 (RSLREVVRNRTLLVVEKSQESRKIRHEGGGSDVDGLMDM) are excised as a propeptide. A disordered region spans residues 49 to 79 (KIRHEGGGSDVDGLMDMDYNSANKKRPIHNR). At tyrosine 67 the chain carries Sulfotyrosine. Proline 75 carries the hydroxyproline modification.

Belongs to the RGF family. As to quaternary structure, binds to LRR receptor-like serine/threonine-protein kinases to trigger their dimerization with SERK proteins and subsequent signaling. As to expression, expressed in siliques, stems, hypocotyls, shoot apex, leaves, flowers and cotyledons, and, to a lower extent, in roots.

The protein localises to the secreted. It is found in the endoplasmic reticulum. Its function is as follows. Signaling peptide (root growth factor) that regulates the pattern of root growth and lateral root development by modulating the length and the number of cortical cells in the root apical meristem (RAM), and the anticlinal asymmetric cell divisions in lateral root initiation cells. Also involved in the regulation of hypocotyl bending and root gravitropism, probably by influencing the formation of auxin gradients. Maintains the postembryonic root stem cell niche. This Arabidopsis thaliana (Mouse-ear cress) protein is Protein GOLVEN 2.